The sequence spans 187 residues: Large ribosomal subunit protein uL5 (187 aa).

It belongs to the universal ribosomal protein uL5 family. Part of the 50S ribosomal subunit; part of the 5S rRNA/L5/L18/L25 subcomplex. Contacts the 5S rRNA and the P site tRNA. Forms a bridge to the 30S subunit in the 70S ribosome.

In terms of biological role, this is one of the proteins that bind and probably mediate the attachment of the 5S RNA into the large ribosomal subunit, where it forms part of the central protuberance. In the 70S ribosome it contacts protein S13 of the 30S subunit (bridge B1b), connecting the 2 subunits; this bridge is implicated in subunit movement. Contacts the P site tRNA; the 5S rRNA and some of its associated proteins might help stabilize positioning of ribosome-bound tRNAs. This chain is Large ribosomal subunit protein uL5, found in Nocardia farcinica (strain IFM 10152).